We begin with the raw amino-acid sequence, 451 residues long: V-type proton ATPase subunit S1 (451 aa).

The signal sequence occupies residues Met-1–Ala-16. The Lumenal portion of the chain corresponds to Tyr-17–Ser-407. Residues Asn-191, Asn-235, Asn-249, and Asn-330 are each glycosylated (N-linked (GlcNAc...) asparagine). Residues Trp-408–Leu-428 traverse the membrane as a helical segment. The Cytoplasmic segment spans residues Gln-429–Glu-451.

It belongs to the vacuolar ATPase subunit S1 family. Accessory component of the multisubunit proton-transporting vacuolar (V)-ATPase protein pump. In terms of tissue distribution, expressed in pharynx, hypodermis, intestine, vulval hypodermis and the H-shape excretory cell.

It is found in the membrane. Functionally, accessory subunit of the proton-transporting vacuolar (V)-ATPase protein pump, which is required for luminal acidification of secretory vesicles. In the germline, required for the trafficking of the receptor RME-2 to the oocyte cell membrane where it regulates the uptake of yolk proteins. Also, plays an essential role in osmoregulation in the embryo, probably by regulating the proper formation of the eggshell. This Caenorhabditis elegans protein is V-type proton ATPase subunit S1.